We begin with the raw amino-acid sequence, 293 residues long: Homeobox protein ceh-24 (293 aa).

2 stretches are compositionally biased toward basic and acidic residues: residues 1–15 (MSEK…KKDE) and 22–38 (QETK…MKIK). Disordered stretches follow at residues 1–38 (MSEK…MKIK) and 203–256 (EKEK…SNGV). Positions 144–203 (RRKRRVLFSQAQVYELERRFKQAKYLTAPEREQLANSIRLTPTQVKIWFQNHRYKCKRQE) form a DNA-binding region, homeobox.

It belongs to the NK-2 homeobox family. As to expression, expressed in the 8 vulval muscles, 8-10 ventral neurons in the head and in the most posterior pharyngeal muscle cell, m8.

It is found in the nucleus. Probable transcriptional regulator that is required in neural development for the normal formation of sublateral cholinergic motor neuron processes. Plays a role in regulating the expression of acetylcholine transporter protein unc-17 in the sublateral processes. In particular, it is required in sublateral motor neurons for a left-right turning behavior that occurs during the lethargus phase of the normal sleep process called 'flipping'. During 'flipping' animals rotate 180 degrees about their longitudinal axis. The sequence is that of Homeobox protein ceh-24 from Caenorhabditis briggsae.